Consider the following 256-residue polypeptide: MLTYPNINPIAFSLGPLKVHWYGLMYLIGFVSAWLLGYWRIKHYKLNWNNDQLSDLIFYSALGVILGGRVGYMLFYDFQEFIHHPWVLFKIWEGGMSFHGGLLGVVIAAWLFCRKYGKTFLEVGDFVAPLVPLGLAAGRLGNFINGELWGRITDVPWGMIYPHVDDQPRHPSQLYEFGLEGVALFILIWCYASKPRQQGRVSALFLMGYAICRLIAESFRQPDSQLGFVAFGWLTMGQVLSIPMLLIGIWLWWAKR.

Helical transmembrane passes span 19 to 39 (VHWYGLMYLIGFVSAWLLGYW), 56 to 76 (LIFYSALGVILGGRVGYMLFY), and 91 to 111 (IWEGGMSFHGGLLGVVIAAWL). Arginine 139 lines the a 1,2-diacyl-sn-glycero-3-phospho-(1'-sn-glycerol) pocket. A helical transmembrane segment spans residues 231 to 251 (FGWLTMGQVLSIPMLLIGIWL).

The protein belongs to the Lgt family.

It is found in the cell inner membrane. It carries out the reaction L-cysteinyl-[prolipoprotein] + a 1,2-diacyl-sn-glycero-3-phospho-(1'-sn-glycerol) = an S-1,2-diacyl-sn-glyceryl-L-cysteinyl-[prolipoprotein] + sn-glycerol 1-phosphate + H(+). It participates in protein modification; lipoprotein biosynthesis (diacylglyceryl transfer). Catalyzes the transfer of the diacylglyceryl group from phosphatidylglycerol to the sulfhydryl group of the N-terminal cysteine of a prolipoprotein, the first step in the formation of mature lipoproteins. In Legionella pneumophila (strain Lens), this protein is Phosphatidylglycerol--prolipoprotein diacylglyceryl transferase.